The following is a 347-amino-acid chain: tRNA N6-adenosine threonylcarbamoyltransferase (347 aa).

2 residues coordinate Fe cation: histidine 111 and histidine 115. Residues 133–137 (LASGG), aspartate 166, glycine 179, and asparagine 278 each bind substrate. Aspartate 306 is a binding site for Fe cation.

Belongs to the KAE1 / TsaD family. Fe(2+) serves as cofactor.

Its subcellular location is the cytoplasm. The enzyme catalyses L-threonylcarbamoyladenylate + adenosine(37) in tRNA = N(6)-L-threonylcarbamoyladenosine(37) in tRNA + AMP + H(+). Required for the formation of a threonylcarbamoyl group on adenosine at position 37 (t(6)A37) in tRNAs that read codons beginning with adenine. Is involved in the transfer of the threonylcarbamoyl moiety of threonylcarbamoyl-AMP (TC-AMP) to the N6 group of A37, together with TsaE and TsaB. TsaD likely plays a direct catalytic role in this reaction. The chain is tRNA N6-adenosine threonylcarbamoyltransferase from Paramagnetospirillum magneticum (strain ATCC 700264 / AMB-1) (Magnetospirillum magneticum).